The primary structure comprises 291 residues: MKKKLILGLVMMMALFSLAACGGGGNVVKTDSGDVTQDELYDAMKDKYGSEFVQQLTFEKILGDKYKVSDEDVDKKFKEYKSQYGDQFSAVLAQSGLTEKSFKSQLKYNLLVQKATEANADTSDKALKEYYKTWQPDITVSHILVADENKAKEVEQKLKDGAKFADLAKEYSTDTATKENGGQLAPFGSGKMDPAFEKAAYALKNKGDISAPVKTQYGYHIIQMDKPATKTTFDKDKKAVKEAYLASQLTTENMQKTLKKEYKDANVKVEDKDLKDAFKDFDGSASKDSSK.

Positions 1-20 (MKKKLILGLVMMMALFSLAA) are cleaved as a signal peptide. C21 carries the N-palmitoyl cysteine lipid modification. C21 is lipidated: S-diacylglycerol cysteine. The PpiC domain maps to 135-226 (QPDITVSHIL…YGYHIIQMDK (92 aa)).

It belongs to the PrsA family.

It is found in the cell membrane. The enzyme catalyses [protein]-peptidylproline (omega=180) = [protein]-peptidylproline (omega=0). Plays a major role in protein secretion by helping the post-translocational extracellular folding of several secreted proteins. In Listeria innocua serovar 6a (strain ATCC BAA-680 / CLIP 11262), this protein is Foldase protein PrsA 2 (prsA2).